The sequence spans 102 residues: Auxin-responsive protein SAUR68 (102 aa).

The protein belongs to the ARG7 family.

The protein resides in the cell membrane. In terms of biological role, may promote auxin-stimulated organ elongation, such as hypocotyls, stamen filaments and petals. The chain is Auxin-responsive protein SAUR68 from Arabidopsis thaliana (Mouse-ear cress).